Reading from the N-terminus, the 473-residue chain is Lactate utilization protein B (473 aa).

4Fe-4S ferredoxin-type domains follow at residues 302–332 and 351–380; these read GSEF…GHSY and YDDY…LHDL. [4Fe-4S] cluster is bound by residues Cys311, Cys314, Cys317, Cys321, Cys364, Cys367, and Cys371.

Belongs to the LutB/YkgF family.

Functionally, is involved in L-lactate degradation and allows cells to grow with lactate as the sole carbon source. Has probably a role as an electron transporter during oxidation of L-lactate. The polypeptide is Lactate utilization protein B (Bacillus cereus (strain G9842)).